We begin with the raw amino-acid sequence, 1475 residues long: Protein STU1 (1475 aa).

Disordered regions lie at residues 870–913 (REST…EPDL) and 1113–1134 (DGES…NRPA). The segment covering 887–896 (DGAHGGDARD) has biased composition (basic and acidic residues).

The protein belongs to the CLASP family. In terms of assembly, interacts with microtubules.

The protein localises to the cytoplasm. It localises to the cytoskeleton. It is found in the nucleus. The protein resides in the spindle. Functionally, microtubule binding protein that promotes the stabilization of dynamic microtubules. Required for mitotic spindle formation. This is Protein STU1 (STU1) from Eremothecium gossypii (strain ATCC 10895 / CBS 109.51 / FGSC 9923 / NRRL Y-1056) (Yeast).